The chain runs to 363 residues: Phospho-N-acetylmuramoyl-pentapeptide-transferase (363 aa).

10 helical membrane-spanning segments follow: residues 15–33 (FTTL…SFIF), 82–102 (NTPT…LLIV), 106–126 (FYSM…IIGF), 147–167 (FILQ…NGYI), 183–203 (IVIF…VNLT), 207–227 (DGLA…EIFI), 233–253 (LIIY…FLKF), 260–280 (IFMG…ISIL), 285–305 (FTLF…IIQV), and 341–361 (IVEN…VLKI).

The protein belongs to the glycosyltransferase 4 family. MraY subfamily. The cofactor is Mg(2+).

It localises to the cell inner membrane. The enzyme catalyses UDP-N-acetyl-alpha-D-muramoyl-L-alanyl-gamma-D-glutamyl-meso-2,6-diaminopimeloyl-D-alanyl-D-alanine + di-trans,octa-cis-undecaprenyl phosphate = di-trans,octa-cis-undecaprenyl diphospho-N-acetyl-alpha-D-muramoyl-L-alanyl-D-glutamyl-meso-2,6-diaminopimeloyl-D-alanyl-D-alanine + UMP. It functions in the pathway cell wall biogenesis; peptidoglycan biosynthesis. In terms of biological role, catalyzes the initial step of the lipid cycle reactions in the biosynthesis of the cell wall peptidoglycan: transfers peptidoglycan precursor phospho-MurNAc-pentapeptide from UDP-MurNAc-pentapeptide onto the lipid carrier undecaprenyl phosphate, yielding undecaprenyl-pyrophosphoryl-MurNAc-pentapeptide, known as lipid I. In Prochlorococcus marinus (strain MIT 9515), this protein is Phospho-N-acetylmuramoyl-pentapeptide-transferase.